Consider the following 336-residue polypeptide: Glyceraldehyde-3-phosphate dehydrogenase (336 aa).

Residues arginine 12 to isoleucine 13, aspartate 34, and arginine 79 contribute to the NAD(+) site. D-glyceraldehyde 3-phosphate is bound by residues serine 150–threonine 152, threonine 181, threonine 210–glycine 211, and arginine 233. Cysteine 151 acts as the Nucleophile in catalysis. NAD(+) is bound at residue asparagine 315.

The protein belongs to the glyceraldehyde-3-phosphate dehydrogenase family. In terms of assembly, homotetramer.

It localises to the cytoplasm. The catalysed reaction is D-glyceraldehyde 3-phosphate + phosphate + NAD(+) = (2R)-3-phospho-glyceroyl phosphate + NADH + H(+). It participates in carbohydrate degradation; glycolysis; pyruvate from D-glyceraldehyde 3-phosphate: step 1/5. The chain is Glyceraldehyde-3-phosphate dehydrogenase (gpdA) from Aspergillus niger.